A 165-amino-acid chain; its full sequence is Protein-export protein SecB (165 aa).

Belongs to the SecB family. In terms of assembly, homotetramer, a dimer of dimers. One homotetramer interacts with 1 SecA dimer.

The protein localises to the cytoplasm. One of the proteins required for the normal export of preproteins out of the cell cytoplasm. It is a molecular chaperone that binds to a subset of precursor proteins, maintaining them in a translocation-competent state. It also specifically binds to its receptor SecA. This is Protein-export protein SecB from Colwellia psychrerythraea (strain 34H / ATCC BAA-681) (Vibrio psychroerythus).